We begin with the raw amino-acid sequence, 547 residues long: Chaperonin GroEL (547 aa).

ATP is bound by residues 30–33 (TLGP), Lys-51, 87–91 (DGTTT), Gly-415, 479–481 (NAA), and Asp-495.

It belongs to the chaperonin (HSP60) family. Forms a cylinder of 14 subunits composed of two heptameric rings stacked back-to-back. Interacts with the co-chaperonin GroES.

The protein localises to the cytoplasm. The enzyme catalyses ATP + H2O + a folded polypeptide = ADP + phosphate + an unfolded polypeptide.. Its function is as follows. Together with its co-chaperonin GroES, plays an essential role in assisting protein folding. The GroEL-GroES system forms a nano-cage that allows encapsulation of the non-native substrate proteins and provides a physical environment optimized to promote and accelerate protein folding. The protein is Chaperonin GroEL of Pseudomonas syringae pv. syringae (strain B728a).